Here is a 28-residue protein sequence, read N- to C-terminus: Kappa-buthitoxin-Tt2b (28 aa).

3 disulfide bridges follow: Cys-2-Cys-24, Cys-7-Cys-20, and Cys-11-Cys-26.

In terms of tissue distribution, expressed by the venom gland.

The protein resides in the secreted. In terms of biological role, blocks potassium channels Shaker-IR (with inactivation domain removed) and hKv1.2/KCNA2. This Tityus trivittatus (Argentinean scorpion) protein is Kappa-buthitoxin-Tt2b.